We begin with the raw amino-acid sequence, 116 residues long: Beta-2-microglobulin (116 aa).

The first 19 residues, 1–19, serve as a signal peptide directing secretion; it reads MRAIITFALFCVLYVTVQG. One can recognise an Ig-like C1-type domain in the interval 24 to 110; that stretch reads PKVQVYSHFP…VRHMNNKNIY (87 aa). Residues cysteine 44 and cysteine 99 are joined by a disulfide bond.

This sequence belongs to the beta-2-microglobulin family. In terms of assembly, heterodimer of an alpha chain and a beta chain. Beta-2-microglobulin is the beta-chain of major histocompatibility complex class I molecules.

It localises to the secreted. Component of the class I major histocompatibility complex (MHC). Involved in the presentation of peptide antigens to the immune system. This chain is Beta-2-microglobulin (b2m), found in Cyprinus carpio (Common carp).